The sequence spans 413 residues: DDQGHTHRNLVRKSVRNLSPAERRSLVHALKSLQEDSSADGFQSLASFHAQPPLCPYPEANKRFACCVHGMATFPEWHRLYTVQFEDALRRHGSVVGIPYWDTVVPQEDLPAFFNDEIWDDPLFHANFTNPFNGADIDFNHQKIARDINVDKLFKEGPKGYDTWSFKQYIYALEQEDYCDFEVQFEIAHNAIHAWVGGTEEYSMGHLHYASYDPVFILHHSNTDRLFALWQELQKFRGHDPNEVNCALEMMREPLKPFSFGAPYNLNPTTKEHSKPEDTFDYKGHFHYEYDHLELQGMNVQRLHDYINQQKERDRVFAGFLLEGIGTSAHLDFSICKIDGECTHAGYFDVLGGSLETPWQFDRLYKYEITDVLESKGLDVHDVFDIKITQTSWDNEDISTDRFPPPSVIYVPK.

N-linked (GlcNAc...) (high mannose) asparagine glycosylation is present at asparagine 17. A Cu cation-binding site is contributed by histidine 49. Cysteine 55 and cysteine 66 are oxidised to a cystine. Positions 67–69 form a cross-link, 2'-(S-cysteinyl)-histidine (Cys-His); that stretch reads CVH. 2 residues coordinate Cu cation: histidine 69 and histidine 78. A glycan (N-linked (GlcNAc...) (high mannose) asparagine) is linked at asparagine 127. Disulfide bonds link cysteine 179–cysteine 246 and cysteine 336–cysteine 342. Residues histidine 189, histidine 193, and histidine 220 each coordinate Cu cation.

The protein belongs to the tyrosinase family. Hemocyanin subfamily. Decamers of large identical subunits, each containing 8 globular oxygen-binding functional units. Requires Cu(2+) as cofactor. As to expression, hemolymph.

It localises to the secreted. It is found in the extracellular space. Hemocyanins are copper-containing oxygen carriers occurring freely dissolved in the hemolymph of many mollusks and arthropods. This is Hemocyanin type 2 unit e from Rapana venosa (Veined rapa whelk).